Here is a 638-residue protein sequence, read N- to C-terminus: Bromodomain-containing factor 2 (638 aa).

The span at 1-10 shows a compositional bias: basic and acidic residues; that stretch reads MSRTNMDTRH. Residues 1-54 are disordered; the sequence is MSRTNMDTRHAHSALLAAPQSATANSRSSNSSSESSSNKNNINVGVGDDSGNVS. Residues 25–43 are compositionally biased toward low complexity; that stretch reads NSRSSNSSSESSSNKNNIN. The 110-residue stretch at 130-239 folds into the Bromo 1 domain; the sequence is EAEELPPHQS…KYFEKKLSAM (110 aa). Residues 250–306 form a disordered region; that stretch reads KKTSRNRKKNEDMDSPLVIRRSVSTTNDNIGESGNREGVSGGRPKRTIHPPKSKDLF. Residue S264 is modified to Phosphoserine. Residues 271 to 281 show a composition bias toward polar residues; sequence SVSTTNDNIGE. One can recognise a Bromo 2 domain in the interval 317-426; the sequence is KTLQKKFRTC…ELFNFHWLEN (110 aa). The tract at residues 435–460 is disordered; sequence TDSDLEEDNYSSSYSSDDEYDDEDIN. Acidic residues predominate over residues 450 to 460; that stretch reads SDDEYDDEDIN. Residues 468-537 adopt a coiled-coil conformation; that stretch reads AIQYLEQKLK…INELSDLEMN (70 aa). The region spanning 506–590 is the NET domain; the sequence is TLLRRKAMKH…EKKNNNNSKR (85 aa). A disordered region spans residues 586-638; the sequence is NNSKRKLSGNYSTAPTNKKKKTLKFLEKDEIINNNNYSDSEEDSSDSSDSDSD. Residues 624–638 show a composition bias toward acidic residues; that stretch reads DSEEDSSDSSDSDSD.

It belongs to the BET family. Interacts with the TFIID subunit TAF7 and with histone H4. In terms of processing, phosphorylated by the casein kinase CK2 complex.

It is found in the cytoplasm. Its subcellular location is the nucleus. Transcription factor involved in the expression of a broad class of genes including snRNAs. Required for sporulation and DNA-damage repair. Prevents the spreading of SIR silencing at telomeres and protects histone H4, but not H3, from deacetylation. The sequence is that of Bromodomain-containing factor 2 (BDF2) from Saccharomyces cerevisiae (strain ATCC 204508 / S288c) (Baker's yeast).